A 459-amino-acid chain; its full sequence is UDP-N-acetylmuramate--L-alanine ligase (459 aa).

118-124 (GTHGKTT) is an ATP binding site.

Belongs to the MurCDEF family.

The protein resides in the cytoplasm. It carries out the reaction UDP-N-acetyl-alpha-D-muramate + L-alanine + ATP = UDP-N-acetyl-alpha-D-muramoyl-L-alanine + ADP + phosphate + H(+). It functions in the pathway cell wall biogenesis; peptidoglycan biosynthesis. Its function is as follows. Cell wall formation. The polypeptide is UDP-N-acetylmuramate--L-alanine ligase (Agathobacter rectalis (strain ATCC 33656 / DSM 3377 / JCM 17463 / KCTC 5835 / VPI 0990) (Eubacterium rectale)).